The primary structure comprises 713 residues: Polyribonucleotide nucleotidyltransferase (713 aa).

Positions 491 and 497 each coordinate Mg(2+). Residues 558-617 (PRMITIKINPEKIRDVIGKGGSVIRALTEETGTTIDISDDGVVTIASTSSDGMAEAKKRI) form the KH domain. The region spanning 627–695 (GQVYEGTVLK…EKGRVRLSAK (69 aa)) is the S1 motif domain.

This sequence belongs to the polyribonucleotide nucleotidyltransferase family. It depends on Mg(2+) as a cofactor.

It localises to the cytoplasm. It carries out the reaction RNA(n+1) + phosphate = RNA(n) + a ribonucleoside 5'-diphosphate. Involved in mRNA degradation. Catalyzes the phosphorolysis of single-stranded polyribonucleotides processively in the 3'- to 5'-direction. In Burkholderia cenocepacia (strain ATCC BAA-245 / DSM 16553 / LMG 16656 / NCTC 13227 / J2315 / CF5610) (Burkholderia cepacia (strain J2315)), this protein is Polyribonucleotide nucleotidyltransferase.